The sequence spans 501 residues: Glycerol kinase (501 aa).

Threonine 16 lines the ADP pocket. Residues threonine 16, threonine 17, and serine 18 each coordinate ATP. Residue threonine 16 participates in sn-glycerol 3-phosphate binding. Arginine 20 lines the ADP pocket. Arginine 84, glutamate 85, tyrosine 135, and aspartate 242 together coordinate sn-glycerol 3-phosphate. Glycerol contacts are provided by arginine 84, glutamate 85, tyrosine 135, aspartate 242, and glutamine 243. Threonine 264 and glycine 307 together coordinate ADP. ATP is bound by residues threonine 264, glycine 307, glutamine 311, and glycine 408. Position 408 (glycine 408) interacts with ADP.

This sequence belongs to the FGGY kinase family.

The enzyme catalyses glycerol + ATP = sn-glycerol 3-phosphate + ADP + H(+). The protein operates within polyol metabolism; glycerol degradation via glycerol kinase pathway; sn-glycerol 3-phosphate from glycerol: step 1/1. Functionally, key enzyme in the regulation of glycerol uptake and metabolism. Catalyzes the phosphorylation of glycerol to yield sn-glycerol 3-phosphate. This chain is Glycerol kinase, found in Saccharolobus islandicus (strain L.S.2.15 / Lassen #1) (Sulfolobus islandicus).